Reading from the N-terminus, the 213-residue chain is Receptor-binding cancer antigen expressed on SiSo cells (213 aa).

Over 1-6 (MAITQF) the chain is Extracellular. A helical; Signal-anchor for type III membrane protein transmembrane segment spans residues 7 to 27 (RLFKFCTCLATVFSFLKRLIC). Residues 28–213 (RSGRGRKLSG…EQNKIGVKLS (186 aa)) lie on the Cytoplasmic side of the membrane. S36 carries the phosphoserine modification. T41 carries the post-translational modification Phosphothreonine. Y94 bears the Phosphotyrosine mark. Residues 163 to 211 (EDAAWQAEEVLRQQKLADREKRAAEQQRKKMEKEAQRLMKKEQNKIGVK) adopt a coiled-coil conformation. A compositionally biased stretch (basic and acidic residues) spans 178-206 (LADREKRAAEQQRKKMEKEAQRLMKKEQN). The segment at 178 to 213 (LADREKRAAEQQRKKMEKEAQRLMKKEQNKIGVKLS) is disordered.

As to quaternary structure, homodimer. As to expression, widely expressed. Expressed in ovary, testis, prostate, thymus, muscle and heart, but not in small intestine, colon, lymph nodes, or peripherical blood lymphocytes. The protein is not detected in any of the above organs.

It is found in the golgi apparatus membrane. In terms of biological role, may participate in suppression of cell proliferation and induces apoptotic cell death through activation of interleukin-1-beta converting enzyme (ICE)-like proteases. This is Receptor-binding cancer antigen expressed on SiSo cells (EBAG9) from Homo sapiens (Human).